The primary structure comprises 161 residues: Putative sporulation sigma factor-processing peptidase (161 aa).

Residue D38 is part of the active site.

Belongs to the peptidase U4 family.

In terms of biological role, probably activates the RNA polymerase sigma-35 factor at the stage II of sporulation. The sequence is that of Putative sporulation sigma factor-processing peptidase from Bacillus thuringiensis subsp. kurstaki.